Consider the following 312-residue polypeptide: Aspartate carbamoyltransferase catalytic subunit (312 aa).

Carbamoyl phosphate-binding residues include arginine 58 and threonine 59. Residue lysine 86 coordinates L-aspartate. Carbamoyl phosphate is bound by residues arginine 108, histidine 136, and glutamine 139. Arginine 169 and arginine 223 together coordinate L-aspartate. Carbamoyl phosphate contacts are provided by glycine 264 and proline 265.

The protein belongs to the aspartate/ornithine carbamoyltransferase superfamily. ATCase family. As to quaternary structure, heterododecamer (2C3:3R2) of six catalytic PyrB chains organized as two trimers (C3), and six regulatory PyrI chains organized as three dimers (R2).

The enzyme catalyses carbamoyl phosphate + L-aspartate = N-carbamoyl-L-aspartate + phosphate + H(+). It participates in pyrimidine metabolism; UMP biosynthesis via de novo pathway; (S)-dihydroorotate from bicarbonate: step 2/3. In terms of biological role, catalyzes the condensation of carbamoyl phosphate and aspartate to form carbamoyl aspartate and inorganic phosphate, the committed step in the de novo pyrimidine nucleotide biosynthesis pathway. The polypeptide is Aspartate carbamoyltransferase catalytic subunit (Acetivibrio thermocellus (strain ATCC 27405 / DSM 1237 / JCM 9322 / NBRC 103400 / NCIMB 10682 / NRRL B-4536 / VPI 7372) (Clostridium thermocellum)).